The following is a 565-amino-acid chain: Polycomb protein EED (565 aa).

WD repeat units follow at residues 89–133 (DDGN…LYRT), 136–176 (GHGG…EKQP), 185–224 (GHSYDLLSVAFHDNGRYVLSAGHDQVINLWALPEFPNEHM), and 240–278 (IHNNLVDCVAFYGDLILSRACHEDTIVLWRIEGFSSDDP). Residues 417-488 (VKKAPGAAGS…SASPDPDSPF (72 aa)) form a disordered region. Residues 429–450 (GTAANGGHNNNNNNNNNNNNNN) are compositionally biased toward low complexity. Residues 451 to 468 (HETGSQRSFSATNNLSNS) show a composition bias toward polar residues. The stretch at 519 to 559 (IDGAFVGRQVGWSPEGEWCVVVGNGNRALIYQRWGKERGLG) is one WD 5 repeat.

Belongs to the WD repeat ESC family. As to quaternary structure, component of the polycomb repressive complex 2 (PRC2) that consists of four core subunits icluding EZH2, EED, SUZ12, and RBBP4, among which EZH2 is the catalytic subunit and which minimally requires EED and SUZ12 for catalysis.

The protein resides in the nucleus. Functionally, component of the of the Polycomb Repressive Complex 2 (PRC2), a histone H3 lysine methyltransferase responsible for generating mono-, di-, and tri-methylation on Lys27 (H3K27me1, H3K27me2 and H3K27me3). The tri-methylated form is known to be critical in gene repression, and its proper placement is essential in defining repression patterns during development. EED is not a catalytic subunit but is required for the complex regulation of histone H3 lysine methylation by EZH2. This is Polycomb protein EED from Chaetomium thermophilum (strain DSM 1495 / CBS 144.50 / IMI 039719) (Thermochaetoides thermophila).